We begin with the raw amino-acid sequence, 921 residues long: Alanine--tRNA ligase (921 aa).

Histidine 602, histidine 606, cysteine 706, and histidine 710 together coordinate Zn(2+).

It belongs to the class-II aminoacyl-tRNA synthetase family. Zn(2+) is required as a cofactor.

Its subcellular location is the cytoplasm. The catalysed reaction is tRNA(Ala) + L-alanine + ATP = L-alanyl-tRNA(Ala) + AMP + diphosphate. Functionally, catalyzes the attachment of alanine to tRNA(Ala) in a two-step reaction: alanine is first activated by ATP to form Ala-AMP and then transferred to the acceptor end of tRNA(Ala). Also edits incorrectly charged Ser-tRNA(Ala) and Gly-tRNA(Ala) via its editing domain. The protein is Alanine--tRNA ligase of Hyperthermus butylicus (strain DSM 5456 / JCM 9403 / PLM1-5).